Reading from the N-terminus, the 180-residue chain is Large ribosomal subunit protein uL5 (180 aa).

This sequence belongs to the universal ribosomal protein uL5 family. Part of the 50S ribosomal subunit; part of the 5S rRNA/L5/L18/L25 subcomplex. Contacts the 5S rRNA and the P site tRNA. Forms a bridge to the 30S subunit in the 70S ribosome.

This is one of the proteins that bind and probably mediate the attachment of the 5S RNA into the large ribosomal subunit, where it forms part of the central protuberance. In the 70S ribosome it contacts protein S13 of the 30S subunit (bridge B1b), connecting the 2 subunits; this bridge is implicated in subunit movement. Contacts the P site tRNA; the 5S rRNA and some of its associated proteins might help stabilize positioning of ribosome-bound tRNAs. This chain is Large ribosomal subunit protein uL5, found in Synechocystis sp. (strain ATCC 27184 / PCC 6803 / Kazusa).